Here is a 974-residue protein sequence, read N- to C-terminus: ATP-dependent RNA helicase DBP7 (974 aa).

A disordered region spans residues 1–135 (MDDNDDGLML…SSAASSSRKA (135 aa)). Low complexity predominate over residues 13–24 (AAPAAGSASVSS). Positions 25-48 (KRSKQTAKARFAQKRTAHQLRKQA) are enriched in basic residues. Low complexity-rich tracts occupy residues 67–85 (PASA…SPAA), 92–102 (ATSTSSAALSA), and 118–133 (TSRS…SSSR). A Q motif motif is present at residues 200–230 (SDFASCGLDPLLVYHLASKMNIGSNPTAIQK). The region spanning 236-477 (LLHPGLDRDI…GKTLVNPKII (242 aa)) is the Helicase ATP-binding domain. 249–256 (AQTGSGKT) provides a ligand contact to ATP. A DEAD box motif is present at residues 381–384 (DEAD). One can recognise a Helicase C-terminal domain in the interval 531–747 (LLRSYISRAR…TRKITPASIE (217 aa)). Residues 836–887 (KSSAIGASSTPASSHETTNKKRMRIAPDTAESDSSSDSSDDAGSDYESHSNK) are disordered. Over residues 840–851 (IGASSTPASSHE) the composition is skewed to polar residues.

The protein belongs to the DEAD box helicase family. DDX31/DBP7 subfamily.

It localises to the nucleus. It is found in the nucleolus. It carries out the reaction ATP + H2O = ADP + phosphate + H(+). Functionally, ATP-binding RNA helicase involved in the biogenesis of 60S ribosomal subunits and is required for the normal formation of 25S and 5.8S rRNAs. The protein is ATP-dependent RNA helicase DBP7 (DBP7) of Mycosarcoma maydis (Corn smut fungus).